The chain runs to 777 residues: B3 domain-containing protein REM-like 1 (777 aa).

Positions 97-193 form a DNA-binding region, TF-B3 1; sequence FVTFTLAPVD…TPVLSLCFEE (97 aa). Disordered regions lie at residues 200 to 248 and 344 to 391; these read VGEE…TSPS and KSSS…ESSS. The span at 218-243 shows a compositional bias: basic and acidic residues; that stretch reads KIVKDDNNKDESSTWKREGNHLRCKD. Residues 252-347 constitute a DNA-binding region (TF-B3 2); the sequence is TLTVTITPDS…TPVLSIKSSS (96 aa). The segment covering 344–368 has biased composition (polar residues); that stretch reads KSSSGKGQSEFSKESLSIKPSSGNM. The span at 370–388 shows a compositional bias: basic and acidic residues; the sequence is KKVENNREASRKYPPRSRE. DNA-binding regions (TF-B3) lie at residues 582 to 676 and 683 to 777; these read FLTL…RDSS and FLTL…FYTK.

The protein resides in the nucleus. This is B3 domain-containing protein REM-like 1 from Arabidopsis thaliana (Mouse-ear cress).